A 115-amino-acid chain; its full sequence is Guanylin (115 aa).

Positions 1-23 (MNAWLLSVLCLLGALAVLVEGVT) are cleaved as a signal peptide. A propeptide spanning residues 24–100 (VQDGDLSFPL…LQRLEAIAQD (77 aa)) is cleaved from the precursor. 3 disulfide bridges follow: cysteine 69–cysteine 82, cysteine 104–cysteine 112, and cysteine 107–cysteine 115.

It belongs to the guanylin family. As to expression, intestine and in low abundance in adrenal gland, kidney, and uterus/oviduct.

The protein resides in the secreted. In terms of biological role, endogenous activator of intestinal guanylate cyclase. It stimulates this enzyme through the same receptor binding region as the heat-stable enterotoxins. The chain is Guanylin (Guca2a) from Rattus norvegicus (Rat).